The sequence spans 167 residues: Ribosome maturation factor RimM (167 aa).

The PRC barrel domain occupies 94–165; it reads ENEFYYSDII…KIIITPMEGL (72 aa).

This sequence belongs to the RimM family. Binds ribosomal protein uS19.

It localises to the cytoplasm. Its function is as follows. An accessory protein needed during the final step in the assembly of 30S ribosomal subunit, possibly for assembly of the head region. Essential for efficient processing of 16S rRNA. May be needed both before and after RbfA during the maturation of 16S rRNA. It has affinity for free ribosomal 30S subunits but not for 70S ribosomes. The protein is Ribosome maturation factor RimM of Staphylococcus aureus (strain NCTC 8325 / PS 47).